Consider the following 433-residue polypeptide: Glutamyl-tRNA reductase (433 aa).

Substrate is bound by residues 49 to 52, Ser-109, 114 to 116, and Gln-120; these read TCNR and EGQ. The active-site Nucleophile is the Cys-50. 189 to 194 serves as a coordination point for NADP(+); the sequence is GAGKMS.

This sequence belongs to the glutamyl-tRNA reductase family. In terms of assembly, homodimer.

It catalyses the reaction (S)-4-amino-5-oxopentanoate + tRNA(Glu) + NADP(+) = L-glutamyl-tRNA(Glu) + NADPH + H(+). The protein operates within porphyrin-containing compound metabolism; protoporphyrin-IX biosynthesis; 5-aminolevulinate from L-glutamyl-tRNA(Glu): step 1/2. It participates in porphyrin-containing compound metabolism; chlorophyll biosynthesis. In terms of biological role, catalyzes the NADPH-dependent reduction of glutamyl-tRNA(Glu) to glutamate 1-semialdehyde (GSA). This chain is Glutamyl-tRNA reductase, found in Acaryochloris marina (strain MBIC 11017).